Consider the following 478-residue polypeptide: PRAME family member 26 (478 aa).

Residues 99–126 (RWKLQVLDLQDVCENFWMVWSEAMARGC) form an LRR 1; degenerate repeat. The stretch at 181–205 (HLCCKKLKILGMPFRNIRSILKMVN) is one LRR 2; degenerate repeat. One copy of the LRR 3; degenerate repeat lies at 206–232 (LDCIQEVEVNCKWVLPILTQFTPYLGH). One copy of the LRR 4; degenerate repeat lies at 233 to 268 (MRNLQKLVLSHMDVSRYVSPEQKKEIVTQFTTQFLK). 5 LRR repeats span residues 269 to 294 (LHCL…LSCL), 295 to 326 (KTSL…SQLK), 327 to 347 (TLDL…QILL), 351 to 378 (AATL…ALSR), and 379 to 403 (CFEL…LLSH).

This sequence belongs to the PRAME family.

The chain is PRAME family member 26 from Homo sapiens (Human).